The chain runs to 759 residues: Short transient receptor potential channel 1 (759 aa).

The interval 1 to 30 (MMAALYPSTDLSGVSSSSLPSSPSSSSPNE) is disordered. At 1-311 (MMAALYPSTD…FGQMSGYRRK (311 aa)) the chain is on the cytoplasmic side. Residues 15-28 (SSSSLPSSPSSSSP) show a composition bias toward low complexity. ANK repeat units lie at residues 46-75 (LNEK…SGDL), 83-109 (LGRN…YGCQ), and 124-146 (MDVA…MLLK). Histidine 155, cysteine 159, cysteine 161, and cysteine 164 together coordinate Zn(2+). The discontinuously helical intramembrane region spans 312–345 (PTCKKIMTVLTVGIFWPVLSLCYLIAPKSQFGRI). The Cytoplasmic segment spans residues 346–352 (IHTPFMK). A helical membrane pass occupies residues 353 to 370 (FIIHGASYFTFLLLLNLY). Residues 371-388 (SLVYNEDKKNTMGPALER) are Extracellular-facing. A helical transmembrane segment spans residues 389 to 405 (IDYLLILWIIGMIWSDI). The Cytoplasmic portion of the chain corresponds to 406–421 (KRLWYEGLEDFLEESR). Residues 422–441 (NQLSFVMNSLYLATFALKVV) traverse the membrane as a helical segment. The Extracellular segment spans residues 442–462 (AHNKFHDFADRKDWDAFHPTL). A helical membrane pass occupies residues 463 to 483 (VAEGLFAFANVLSYLRLFFMY). At 484–502 (TTSSILGPLQISMGQMLQD) the chain is on the cytoplasmic side. The chain crosses the membrane as a helical span at residues 503–524 (FGKFLGMFLLVLFSFTIGLTQL). Residues 525–589 (YDKGYTSKEQ…GEELQSFVGA (65 aa)) lie on the Extracellular side of the membrane. Cysteine 537 and cysteine 542 form a disulfide bridge. Residues 590–610 (VIVGTYNVVVVIVLTKLLVAM) traverse the membrane as a helical segment. Residues 611-759 (LHKSFQLIAN…SKYAMFYPKN (149 aa)) lie on the Cytoplasmic side of the membrane.

This sequence belongs to the transient receptor (TC 1.A.4) family. STrpC subfamily. TRPC1 sub-subfamily. Heterotetramer with TRPC4 and/or TRPC5. Forms a heteromeric ion channel with TRPC4, with a 1:3 TRPC1:TRPC4 stoichiometry. Unlike other TRP channel proteins, does not form a homomeric channel. Interacts with TRPC4AP. Interacts with ITPR3. Interacts with MX1 and RNF24. Interacts with FKBP4. Interacts with PLSCR1. Interacts with PKD2L2. Forms a heterotetramer with PKD2 with a 2:2 stoichiometry; has distinct channel properties separate from PKD2 or TRPC1 homomers alone. Post-translationally, activation of PRKCA induces phosphorylation of TRPC1 and subsequent Ca2+ entry into cells. As to expression, expressed in brain, hippocampus, amygdala, Purkinje cells and single neurons in the cortex and striatum.

It localises to the cell membrane. The enzyme catalyses Ca(2+)(in) = Ca(2+)(out). The catalysed reaction is Na(+)(in) = Na(+)(out). It carries out the reaction Li(+)(in) = Li(+)(out). It catalyses the reaction Cs(+)(in) = Cs(+)(out). Its activity is regulated as follows. May be operated by a phosphatidylinositol second messenger system activated by receptor tyrosine kinases or G-protein coupled receptors. Also activated by intracellular calcium store depletion. Its function is as follows. Forms a receptor-activated non-selective calcium permeant cation channel. Forms a heteromeric ion channel with TRPC4 or TRPC5 that has reduced calcium permeability compared to the homomeric TRPC4 or TRPC5 channel. Also permeable to monovalent ions including sodium, lithium and cesium ions. This is Short transient receptor potential channel 1 (Trpc1) from Rattus norvegicus (Rat).